A 477-amino-acid chain; its full sequence is Glycogen synthase (477 aa).

Lys-15 serves as a coordination point for ADP-alpha-D-glucose.

Belongs to the glycosyltransferase 1 family. Bacterial/plant glycogen synthase subfamily.

It carries out the reaction [(1-&gt;4)-alpha-D-glucosyl](n) + ADP-alpha-D-glucose = [(1-&gt;4)-alpha-D-glucosyl](n+1) + ADP + H(+). It participates in glycan biosynthesis; glycogen biosynthesis. In terms of biological role, synthesizes alpha-1,4-glucan chains using ADP-glucose. The chain is Glycogen synthase from Shigella boydii serotype 18 (strain CDC 3083-94 / BS512).